The chain runs to 275 residues: Large ribosomal subunit protein uL2 (275 aa).

The segment at Val223–Lys275 is disordered.

This sequence belongs to the universal ribosomal protein uL2 family. In terms of assembly, part of the 50S ribosomal subunit. Forms a bridge to the 30S subunit in the 70S ribosome.

One of the primary rRNA binding proteins. Required for association of the 30S and 50S subunits to form the 70S ribosome, for tRNA binding and peptide bond formation. It has been suggested to have peptidyltransferase activity; this is somewhat controversial. Makes several contacts with the 16S rRNA in the 70S ribosome. The chain is Large ribosomal subunit protein uL2 from Psychromonas ingrahamii (strain DSM 17664 / CCUG 51855 / 37).